The following is a 170-amino-acid chain: Adenine phosphoribosyltransferase (170 aa).

Belongs to the purine/pyrimidine phosphoribosyltransferase family. In terms of assembly, homodimer.

It is found in the cytoplasm. The enzyme catalyses AMP + diphosphate = 5-phospho-alpha-D-ribose 1-diphosphate + adenine. It participates in purine metabolism; AMP biosynthesis via salvage pathway; AMP from adenine: step 1/1. In terms of biological role, catalyzes a salvage reaction resulting in the formation of AMP, that is energically less costly than de novo synthesis. This chain is Adenine phosphoribosyltransferase, found in Streptococcus sanguinis (strain SK36).